Here is a 419-residue protein sequence, read N- to C-terminus: UDP-N-acetylglucosamine 1-carboxyvinyltransferase (419 aa).

Residue 22–23 (KN) participates in phosphoenolpyruvate binding. Residue R91 coordinates UDP-N-acetyl-alpha-D-glucosamine. C115 (proton donor) is an active-site residue. C115 is subject to 2-(S-cysteinyl)pyruvic acid O-phosphothioketal. UDP-N-acetyl-alpha-D-glucosamine is bound by residues 120-124 (RPVDL), 160-163 (KVSV), D305, and V327.

It belongs to the EPSP synthase family. MurA subfamily.

It is found in the cytoplasm. The catalysed reaction is phosphoenolpyruvate + UDP-N-acetyl-alpha-D-glucosamine = UDP-N-acetyl-3-O-(1-carboxyvinyl)-alpha-D-glucosamine + phosphate. It participates in cell wall biogenesis; peptidoglycan biosynthesis. Its function is as follows. Cell wall formation. Adds enolpyruvyl to UDP-N-acetylglucosamine. This is UDP-N-acetylglucosamine 1-carboxyvinyltransferase from Salmonella agona (strain SL483).